The chain runs to 161 residues: 2-C-methyl-D-erythritol 2,4-cyclodiphosphate synthase (161 aa).

A divalent metal cation-binding residues include aspartate 10 and histidine 12. 4-CDP-2-C-methyl-D-erythritol 2-phosphate contacts are provided by residues 10–12 and 36–37; these read DVH and HS. An a divalent metal cation-binding site is contributed by histidine 44. Residues 58–60, 63–67, and arginine 144 contribute to the 4-CDP-2-C-methyl-D-erythritol 2-phosphate site; these read DIG and FSDTD.

This sequence belongs to the IspF family. In terms of assembly, homotrimer. Requires a divalent metal cation as cofactor.

The catalysed reaction is 4-CDP-2-C-methyl-D-erythritol 2-phosphate = 2-C-methyl-D-erythritol 2,4-cyclic diphosphate + CMP. Its pathway is isoprenoid biosynthesis; isopentenyl diphosphate biosynthesis via DXP pathway; isopentenyl diphosphate from 1-deoxy-D-xylulose 5-phosphate: step 4/6. In terms of biological role, involved in the biosynthesis of isopentenyl diphosphate (IPP) and dimethylallyl diphosphate (DMAPP), two major building blocks of isoprenoid compounds. Catalyzes the conversion of 4-diphosphocytidyl-2-C-methyl-D-erythritol 2-phosphate (CDP-ME2P) to 2-C-methyl-D-erythritol 2,4-cyclodiphosphate (ME-CPP) with a corresponding release of cytidine 5-monophosphate (CMP). The protein is 2-C-methyl-D-erythritol 2,4-cyclodiphosphate synthase of Burkholderia ambifaria (strain MC40-6).